We begin with the raw amino-acid sequence, 862 residues long: Leucine--tRNA ligase (862 aa).

Residues 49 to 59 (PYPSGRIHMGH) carry the 'HIGH' region motif. The short motif at 625-629 (KMSKS) is the 'KMSKS' region element. Residue Lys-628 coordinates ATP.

It belongs to the class-I aminoacyl-tRNA synthetase family.

The protein resides in the cytoplasm. It carries out the reaction tRNA(Leu) + L-leucine + ATP = L-leucyl-tRNA(Leu) + AMP + diphosphate. The sequence is that of Leucine--tRNA ligase from Paramagnetospirillum magneticum (strain ATCC 700264 / AMB-1) (Magnetospirillum magneticum).